The following is a 228-amino-acid chain: Triosephosphate isomerase (228 aa).

A substrate-binding site is contributed by 11–13; the sequence is NFK. The active-site Electrophile is histidine 95. Catalysis depends on glutamate 143, which acts as the Proton acceptor. Substrate-binding positions include isoleucine 148, glycine 183, and 204–205; that span reads AS.

It belongs to the triosephosphate isomerase family. As to quaternary structure, homotetramer; dimer of dimers.

It localises to the cytoplasm. The enzyme catalyses D-glyceraldehyde 3-phosphate = dihydroxyacetone phosphate. It functions in the pathway carbohydrate biosynthesis; gluconeogenesis. It participates in carbohydrate degradation; glycolysis; D-glyceraldehyde 3-phosphate from glycerone phosphate: step 1/1. In terms of biological role, involved in the gluconeogenesis. Catalyzes stereospecifically the conversion of dihydroxyacetone phosphate (DHAP) to D-glyceraldehyde-3-phosphate (G3P). This is Triosephosphate isomerase from Pyrococcus abyssi (strain GE5 / Orsay).